A 172-amino-acid polypeptide reads, in one-letter code: Adenine phosphoribosyltransferase (172 aa).

This sequence belongs to the purine/pyrimidine phosphoribosyltransferase family. Homodimer.

The protein localises to the cytoplasm. The enzyme catalyses AMP + diphosphate = 5-phospho-alpha-D-ribose 1-diphosphate + adenine. It participates in purine metabolism; AMP biosynthesis via salvage pathway; AMP from adenine: step 1/1. Its function is as follows. Catalyzes a salvage reaction resulting in the formation of AMP, that is energically less costly than de novo synthesis. The polypeptide is Adenine phosphoribosyltransferase (Polynucleobacter asymbioticus (strain DSM 18221 / CIP 109841 / QLW-P1DMWA-1) (Polynucleobacter necessarius subsp. asymbioticus)).